Reading from the N-terminus, the 83-residue chain is Small ribosomal subunit protein bS16 (83 aa).

It belongs to the bacterial ribosomal protein bS16 family.

This chain is Small ribosomal subunit protein bS16, found in Aromatoleum aromaticum (strain DSM 19018 / LMG 30748 / EbN1) (Azoarcus sp. (strain EbN1)).